Consider the following 551-residue polypeptide: Glucans biosynthesis protein D (551 aa).

Positions 1–32 (MDRRRFIKGSMAMAAVCGTSGIASLFSQAAFA) form a signal peptide, tat-type signal.

It belongs to the OpgD/OpgG family. Post-translationally, predicted to be exported by the Tat system. The position of the signal peptide cleavage has not been experimentally proven.

It localises to the periplasm. It functions in the pathway glycan metabolism; osmoregulated periplasmic glucan (OPG) biosynthesis. In terms of biological role, probably involved in the control of the structural glucose backbone of osmoregulated periplasmic glucans (OPGs). This Shigella flexneri protein is Glucans biosynthesis protein D (mdoD).